Here is a 134-residue protein sequence, read N- to C-terminus: Large ribosomal subunit protein bL20 (134 aa).

This sequence belongs to the bacterial ribosomal protein bL20 family.

Functionally, binds directly to 23S ribosomal RNA and is necessary for the in vitro assembly process of the 50S ribosomal subunit. It is not involved in the protein synthesizing functions of that subunit. In Brucella abortus (strain S19), this protein is Large ribosomal subunit protein bL20.